Here is a 178-residue protein sequence, read N- to C-terminus: MSRIGKKPIDIPSGVEVTVGADVVSVKGPKGTITTPVHPMVSFTVADNAVEVKRSGDSRQERAQHGLHRSLLANCIEGVSKGFSKTLEVVGVGYKVNVQGKNIVLNVGFSHPVNYELPAGIEASAEGNTKLTISGVDKQLVGEVAAQLRRVRPPEPYKGKGIKYIDEQIRRKAGKSGK.

It belongs to the universal ribosomal protein uL6 family. In terms of assembly, part of the 50S ribosomal subunit.

Its function is as follows. This protein binds to the 23S rRNA, and is important in its secondary structure. It is located near the subunit interface in the base of the L7/L12 stalk, and near the tRNA binding site of the peptidyltransferase center. In Maridesulfovibrio salexigens (strain ATCC 14822 / DSM 2638 / NCIMB 8403 / VKM B-1763) (Desulfovibrio salexigens), this protein is Large ribosomal subunit protein uL6.